A 395-amino-acid chain; its full sequence is Phosphopentomutase (395 aa).

Asp-14, Asp-289, His-294, Asp-330, His-331, and His-342 together coordinate Mn(2+).

This sequence belongs to the phosphopentomutase family. Mn(2+) serves as cofactor.

Its subcellular location is the cytoplasm. The enzyme catalyses 2-deoxy-alpha-D-ribose 1-phosphate = 2-deoxy-D-ribose 5-phosphate. The catalysed reaction is alpha-D-ribose 1-phosphate = D-ribose 5-phosphate. It participates in carbohydrate degradation; 2-deoxy-D-ribose 1-phosphate degradation; D-glyceraldehyde 3-phosphate and acetaldehyde from 2-deoxy-alpha-D-ribose 1-phosphate: step 1/2. Its function is as follows. Isomerase that catalyzes the conversion of deoxy-ribose 1-phosphate (dRib-1-P) and ribose 1-phosphate (Rib-1-P) to deoxy-ribose 5-phosphate (dRib-5-P) and ribose 5-phosphate (Rib-5-P), respectively. The protein is Phosphopentomutase of Mycoplasmopsis pulmonis (strain UAB CTIP) (Mycoplasma pulmonis).